The following is a 120-amino-acid chain: NADH-ubiquinone oxidoreductase chain 3 (120 aa).

3 helical membrane passes run 7–27 (FVYILVLLAISTGLSVILFFL), 62–82 (FYLVAILFLIFDLEITFLFPF), and 89–109 (MTLLSYSLMLIFLIILTIGFI).

The protein belongs to the complex I subunit 3 family.

It localises to the mitochondrion membrane. It carries out the reaction a ubiquinone + NADH + 5 H(+)(in) = a ubiquinol + NAD(+) + 4 H(+)(out). Its function is as follows. Core subunit of the mitochondrial membrane respiratory chain NADH dehydrogenase (Complex I) that is believed to belong to the minimal assembly required for catalysis. Complex I functions in the transfer of electrons from NADH to the respiratory chain. The immediate electron acceptor for the enzyme is believed to be ubiquinone. This is NADH-ubiquinone oxidoreductase chain 3 (nad3) from Dictyostelium discoideum (Social amoeba).